A 685-amino-acid polypeptide reads, in one-letter code: Polyphosphate kinase (685 aa).

N45 is an ATP binding site. Residues R375 and R405 each coordinate Mg(2+). H435 acts as the Phosphohistidine intermediate in catalysis. ATP is bound by residues Y468, R564, and H592.

This sequence belongs to the polyphosphate kinase 1 (PPK1) family. It depends on Mg(2+) as a cofactor. In terms of processing, an intermediate of this reaction is the autophosphorylated ppk in which a phosphate is covalently linked to a histidine residue through a N-P bond.

It catalyses the reaction [phosphate](n) + ATP = [phosphate](n+1) + ADP. In terms of biological role, catalyzes the reversible transfer of the terminal phosphate of ATP to form a long-chain polyphosphate (polyP). This Neisseria meningitidis serogroup A / serotype 4A (strain DSM 15465 / Z2491) protein is Polyphosphate kinase.